Consider the following 1416-residue polypeptide: Tiny macrocysts protein B (1416 aa).

8 helical membrane-spanning segments follow: residues 47–67 (ILTI…GFKH), 93–113 (FGYL…ILGF), 140–160 (FVSF…LIGL), 185–205 (ANLP…IVAF), 231–251 (VTVL…DFVP), 253–273 (LTSI…IIVL), 285–305 (SGFY…MGIN), and 315–335 (ITIV…MFYF). The segment covering 356–372 (LKDANKKGKRNSVEKES) has biased composition (basic and acidic residues). Disordered stretches follow at residues 356–377 (LKDA…PTSK) and 662–691 (IEKS…RRGK). Helical transmembrane passes span 706 to 726 (WLMI…LVVF) and 953 to 973 (AILY…AVLF). Disordered regions lie at residues 1018 to 1103 (RDNL…RPLM) and 1119 to 1144 (NVRL…ATRT). Residues 1024 to 1039 (TTDDDGRDDHLGEDDN) are compositionally biased toward acidic residues. 2 stretches are compositionally biased toward low complexity: residues 1048–1062 (NNNN…NNNN) and 1083–1094 (SSSGSNVLNTSS). Over residues 1123–1144 (QAKDEEITNGGGERKGSDATRT) the composition is skewed to basic and acidic residues. 3 helical membrane-spanning segments follow: residues 1179-1199 (ILAT…TFTV), 1325-1345 (WFLA…FTYF), and 1358-1378 (VLTA…VVLF).

The protein resides in the membrane. Functionally, regulator of the cAMP signaling pathway specific to sexual development. Controls the levels of external cAMP by regulating the expression of phosphodiesterase pdsA and its inhibitor pdiA. The polypeptide is Tiny macrocysts protein B (tmcB) (Dictyostelium discoideum (Social amoeba)).